Here is a 268-residue protein sequence, read N- to C-terminus: 5'-nucleotidase SurE (268 aa).

Residues D24, D25, S55, and N111 each coordinate a divalent metal cation.

The protein belongs to the SurE nucleotidase family. The cofactor is a divalent metal cation.

It is found in the cytoplasm. It carries out the reaction a ribonucleoside 5'-phosphate + H2O = a ribonucleoside + phosphate. Functionally, nucleotidase that shows phosphatase activity on nucleoside 5'-monophosphates. This is 5'-nucleotidase SurE from Deinococcus radiodurans (strain ATCC 13939 / DSM 20539 / JCM 16871 / CCUG 27074 / LMG 4051 / NBRC 15346 / NCIMB 9279 / VKM B-1422 / R1).